Here is a 228-residue protein sequence, read N- to C-terminus: 3,4-dihydroxy-2-butanone 4-phosphate synthase (228 aa).

Residues 37–38, D42, 150–154, and E174 contribute to the D-ribulose 5-phosphate site; these read RE and RRGHT. E38 is a binding site for Mg(2+). H153 contributes to the Mg(2+) binding site.

This sequence belongs to the DHBP synthase family. Homodimer. It depends on Mg(2+) as a cofactor. Requires Mn(2+) as cofactor.

The catalysed reaction is D-ribulose 5-phosphate = (2S)-2-hydroxy-3-oxobutyl phosphate + formate + H(+). It participates in cofactor biosynthesis; riboflavin biosynthesis; 2-hydroxy-3-oxobutyl phosphate from D-ribulose 5-phosphate: step 1/1. Catalyzes the conversion of D-ribulose 5-phosphate to formate and 3,4-dihydroxy-2-butanone 4-phosphate. The polypeptide is 3,4-dihydroxy-2-butanone 4-phosphate synthase (Photobacterium profundum (strain SS9)).